The primary structure comprises 377 residues: tRNA-queuosine alpha-mannosyltransferase (377 aa).

Belongs to the glycosyltransferase group 1 family. Glycosyltransferase 4 subfamily.

It catalyses the reaction queuosine(34) in tRNA(Asp) + GDP-alpha-D-mannose = O-4''-alpha-D-mannosylqueuosine(34) in tRNA(Asp) + GDP + H(+). Its function is as follows. Glycosyltransferase that specifically catalyzes mannosylation of cytoplasmic tRNA(Asp) modified with queuosine at position 34 (queuosine(34)). Mannosylates the cyclopentene moiety of queuosine(34) in tRNA(Asp) to form mannosyl-queuosine(34). The chain is tRNA-queuosine alpha-mannosyltransferase from Drosophila melanogaster (Fruit fly).